Reading from the N-terminus, the 436-residue chain is Testican-3 (436 aa).

The N-terminal stretch at 1 to 22 (MLKVSALLCVCAAAWCSQTLAA) is a signal peptide. 8 cysteine pairs are disulfide-bonded: Cys90-Cys101, Cys95-Cys111, Cys139-Cys169, Cys142-Cys162, Cys151-Cys183, Cys317-Cys341, Cys352-Cys359, and Cys361-Cys380. A Kazal-like domain is found at 133–185 (GLPSSTCKPCPIAYASPVCGSDGHSYSSQCKLEYQACVLGKQISIKCEGRCPC). The Thyroglobulin type-1 domain maps to 314 to 380 (DPPCHTELSN…GSRINGVADC (67 aa)). O-linked (Xyl...) (glycosaminoglycan) serine glycans are attached at residues Ser387 and Ser392. The segment at 393 to 436 (GDFREWTDDEGEEDDIMNDKDDIEDDDEDEGDDDDDGDVHDGYI) is disordered. Acidic residues predominate over residues 399–430 (TDDEGEEDDIMNDKDDIEDDDEDEGDDDDDGD).

Contains chondroitin sulfate and heparan sulfate O-linked oligosaccharides. As to expression, expressed in brain.

The protein resides in the secreted. It localises to the extracellular space. Its subcellular location is the extracellular matrix. Its function is as follows. May participate in diverse steps of neurogenesis. Inhibits the processing of pro-matrix metalloproteinase 2 (MMP-2) by MT1-MMP and MT3-MMP. May interfere with tumor invasion. This is Testican-3 (Spock3) from Mus musculus (Mouse).